We begin with the raw amino-acid sequence, 195 residues long: Elongation factor P (195 aa).

It belongs to the elongation factor P family.

The protein resides in the cytoplasm. The protein operates within protein biosynthesis; polypeptide chain elongation. In terms of biological role, involved in peptide bond synthesis. Stimulates efficient translation and peptide-bond synthesis on native or reconstituted 70S ribosomes in vitro. Probably functions indirectly by altering the affinity of the ribosome for aminoacyl-tRNA, thus increasing their reactivity as acceptors for peptidyl transferase. This Rhodopirellula baltica (strain DSM 10527 / NCIMB 13988 / SH1) protein is Elongation factor P.